Here is a 130-residue protein sequence, read N- to C-terminus: Small ribosomal subunit protein uS9 (130 aa).

Belongs to the universal ribosomal protein uS9 family.

The sequence is that of Small ribosomal subunit protein uS9 from Aliivibrio fischeri (strain MJ11) (Vibrio fischeri).